A 641-amino-acid polypeptide reads, in one-letter code: Bilirubin reductase (641 aa).

Q96 lines the FMN pocket. Residue R167 is the Proton donor of the active site. FMN contacts are provided by residues K214, R295, and 317–318; that span reads GR. The [4Fe-4S] cluster site is built by C341, C344, C348, and C360. Residues A391, E410, Q418, K428, and A455 each contribute to the FAD site.

It in the N-terminal section; belongs to the NADH:flavin oxidoreductase/NADH oxidase family. FAD serves as cofactor. The cofactor is FMN. Requires [4Fe-4S] cluster as cofactor.

It carries out the reaction urobilinogen + 4 A = (4Z,15Z)-bilirubin IXalpha + 4 AH2. The catalysed reaction is urobilinogen + 2 A = (4Z,15Z)-mesobilirubin IXalpha + 2 AH2. Its pathway is porphyrin-containing compound metabolism; protoheme degradation. Bilirubin reductase that catalyzes reduction of mesobilirubin and/or bilirubin to urobilinogen, a key step during heme degradation. Urobilinogen then spontaneously degrades into urobilin, which gives urine its distinctive yellow color. In Mediterraneibacter gnavus (strain CC55_001C), this protein is Bilirubin reductase.